The chain runs to 214 residues: MSITLALSKGRIFEETLPLLKAAGIEVTEDPETSRKLILPTNRPDVRVVLVRATDVPTYVQHGGADLGVVGLDVLLEHGGQGLYQPLDLRIAKCRMSVAVRADFDYAAAVKQGSRIRVATKYVSVARDHFADKGVHVDLIKLYGSMELAPLTGLADAIVDLVSTGSTLKANHLLEVERIMDISSRLVVNQAALKLKREAIRPLIDAFAAAIPQE.

It belongs to the ATP phosphoribosyltransferase family. Short subfamily. As to quaternary structure, heteromultimer composed of HisG and HisZ subunits.

The protein localises to the cytoplasm. The enzyme catalyses 1-(5-phospho-beta-D-ribosyl)-ATP + diphosphate = 5-phospho-alpha-D-ribose 1-diphosphate + ATP. It participates in amino-acid biosynthesis; L-histidine biosynthesis; L-histidine from 5-phospho-alpha-D-ribose 1-diphosphate: step 1/9. Catalyzes the condensation of ATP and 5-phosphoribose 1-diphosphate to form N'-(5'-phosphoribosyl)-ATP (PR-ATP). Has a crucial role in the pathway because the rate of histidine biosynthesis seems to be controlled primarily by regulation of HisG enzymatic activity. The sequence is that of ATP phosphoribosyltransferase from Methylibium petroleiphilum (strain ATCC BAA-1232 / LMG 22953 / PM1).